Consider the following 44-residue polypeptide: F420-non-reducing hydrogenase vhu subunit U (44 aa).

Ni(2+) is bound by residues Sec20 and Cys23. Position 20 (Sec20) is a non-standard amino acid, selenocysteine. A propeptide spans 27 to 44 (removed in mature form); sequence MIVEDAEGNVVFEIVNDE.

The protein belongs to the [NiFe]/[NiFeSe] hydrogenase large subunit family. In terms of assembly, the F420-non-reducing hydrogenase vhu is composed of four subunits; VhuA, VhuD, VhuG and VhuU. Ni(2+) is required as a cofactor.

This chain is F420-non-reducing hydrogenase vhu subunit U (vhuU), found in Methanococcus voltae.